We begin with the raw amino-acid sequence, 537 residues long: Periplasmic murein peptide-binding protein MppA (537 aa).

The first 22 residues, 1-22 (MKHSVSVTCCALLVSSISLSYA), serve as a signal peptide directing secretion. Residues Lys42, Val54, Leu56, Gln289, Arg424, Ser435, Val437, Asp439, and Thr506 each contribute to the L-alanyl-gamma-D-glutamyl-meso-2,6-diaminopimelate site.

This sequence belongs to the bacterial solute-binding protein 5 family. The complex is composed of two ATP-binding proteins (OppD and OppF), two transmembrane proteins (OppB and OppC) and a solute-binding protein (MppA).

It is found in the periplasm. Part of the ABC transporter complex MppA-OppBCDF involved in the uptake of the cell wall murein tripeptide L-alanyl-gamma-D-glutamyl-meso-diaminopimelate. Is involved in the recycling of cell wall peptides. Binds the cell wall peptide L-Ala-D-Gly-gamma-meso-diaminopimelic acid. Can also transport ordinary alpha-linked tripeptides such as Pro-Phe-Lys, but with much lower efficiency than OppA. Cannot bind typical tripeptides such as Lys-Glu-Lys, Lys-Lys-Lys or Ala-Ala-Ala. This is Periplasmic murein peptide-binding protein MppA from Escherichia coli (strain K12).